Here is a 326-residue protein sequence, read N- to C-terminus: tRNA-modifying protein YgfZ (326 aa).

Residues Trp27 and Trp189 each contribute to the folate site.

It belongs to the tRNA-modifying YgfZ family.

Its subcellular location is the cytoplasm. Its function is as follows. Folate-binding protein involved in regulating the level of ATP-DnaA and in the modification of some tRNAs. It is probably a key factor in regulatory networks that act via tRNA modification, such as initiation of chromosomal replication. This Shigella boydii serotype 4 (strain Sb227) protein is tRNA-modifying protein YgfZ.